The primary structure comprises 513 residues: ATP synthase subunit alpha (513 aa).

Position 169–176 (169–176 (GDRQIGKT)) interacts with ATP.

The protein belongs to the ATPase alpha/beta chains family. In terms of assembly, F-type ATPases have 2 components, CF(1) - the catalytic core - and CF(0) - the membrane proton channel. CF(1) has five subunits: alpha(3), beta(3), gamma(1), delta(1), epsilon(1). CF(0) has three main subunits: a(1), b(2) and c(9-12). The alpha and beta chains form an alternating ring which encloses part of the gamma chain. CF(1) is attached to CF(0) by a central stalk formed by the gamma and epsilon chains, while a peripheral stalk is formed by the delta and b chains.

It is found in the cell inner membrane. The catalysed reaction is ATP + H2O + 4 H(+)(in) = ADP + phosphate + 5 H(+)(out). Produces ATP from ADP in the presence of a proton gradient across the membrane. The alpha chain is a regulatory subunit. This chain is ATP synthase subunit alpha, found in Francisella tularensis subsp. mediasiatica (strain FSC147).